The sequence spans 170 residues: Probable chorismate pyruvate-lyase (170 aa).

Residues R77, L114, and E157 each contribute to the substrate site.

It belongs to the UbiC family.

The protein localises to the cytoplasm. It catalyses the reaction chorismate = 4-hydroxybenzoate + pyruvate. It functions in the pathway cofactor biosynthesis; ubiquinone biosynthesis. Its function is as follows. Removes the pyruvyl group from chorismate, with concomitant aromatization of the ring, to provide 4-hydroxybenzoate (4HB) for the ubiquinone pathway. The chain is Probable chorismate pyruvate-lyase from Pasteurella multocida (strain Pm70).